Reading from the N-terminus, the 279-residue chain is Shikimate dehydrogenase (NADP(+)) (279 aa).

Shikimate-binding positions include 20-22 (SRS) and Thr67. Lys71 (proton acceptor) is an active-site residue. Asp83 lines the NADP(+) pocket. Shikimate is bound by residues Asn92 and Asp108. Residues 134 to 138 (GAGGA) and Leu223 contribute to the NADP(+) site. Tyr225 is a shikimate binding site. Gly246 is a binding site for NADP(+).

It belongs to the shikimate dehydrogenase family. As to quaternary structure, homodimer.

The catalysed reaction is shikimate + NADP(+) = 3-dehydroshikimate + NADPH + H(+). The protein operates within metabolic intermediate biosynthesis; chorismate biosynthesis; chorismate from D-erythrose 4-phosphate and phosphoenolpyruvate: step 4/7. In terms of biological role, involved in the biosynthesis of the chorismate, which leads to the biosynthesis of aromatic amino acids. Catalyzes the reversible NADPH linked reduction of 3-dehydroshikimate (DHSA) to yield shikimate (SA). The chain is Shikimate dehydrogenase (NADP(+)) from Cereibacter sphaeroides (strain KD131 / KCTC 12085) (Rhodobacter sphaeroides).